A 302-amino-acid chain; its full sequence is Late embryogenesis abundant protein D-29 (302 aa).

Disordered regions lie at residues 25–93 (HMPS…AKEY), 168–193 (VKNA…LADS), and 205–302 (AKEK…NHKN). Basic and acidic residues-rich tracts occupy residues 34–70 (RDYS…HAAN) and 79–93 (AKDR…AKEY). The span at 205 to 286 (AKEKVRDMAD…KAEETIESAK (82 aa)) shows a compositional bias: basic and acidic residues.

The protein belongs to the LEA type 1 family.

LEA protein are late embryonic proteins abundant in higher plant seed embryos. There are two subsets of LEA proteins (5a and 5b), the first ones are expressed when the cotyledon weight reach 80 mg and the second set are expressed above 100 mg. The function of those proteins is not known. This Gossypium hirsutum (Upland cotton) protein is Late embryogenesis abundant protein D-29.